Consider the following 106-residue polypeptide: Phosphoribosyl-ATP pyrophosphatase (106 aa).

Belongs to the PRA-PH family.

The protein localises to the cytoplasm. It carries out the reaction 1-(5-phospho-beta-D-ribosyl)-ATP + H2O = 1-(5-phospho-beta-D-ribosyl)-5'-AMP + diphosphate + H(+). Its pathway is amino-acid biosynthesis; L-histidine biosynthesis; L-histidine from 5-phospho-alpha-D-ribose 1-diphosphate: step 2/9. The sequence is that of Phosphoribosyl-ATP pyrophosphatase from Rhizorhabdus wittichii (strain DSM 6014 / CCUG 31198 / JCM 15750 / NBRC 105917 / EY 4224 / RW1) (Sphingomonas wittichii).